The following is a 242-amino-acid chain: Segregation and condensation protein A (242 aa).

It belongs to the ScpA family. Component of a cohesin-like complex composed of ScpA, ScpB and the Smc homodimer, in which ScpA and ScpB bind to the head domain of Smc. The presence of the three proteins is required for the association of the complex with DNA.

It is found in the cytoplasm. Participates in chromosomal partition during cell division. May act via the formation of a condensin-like complex containing Smc and ScpB that pull DNA away from mid-cell into both cell halves. The polypeptide is Segregation and condensation protein A (Lactococcus lactis subsp. cremoris (strain SK11)).